The sequence spans 92 residues: FMRFamide-like neuropeptides 16 (92 aa).

A signal peptide spans 1 to 24 (MNFSGFEFSSIVAFFLLILQLSTA). The propeptide occupies 25–55 (AVLPADYAYGVADEMSALPDSGSLFAEQRPS). Phe-64, Phe-74, and Phe-84 each carry phenylalanine amide. The propeptide occupies 87 to 92 (SAPFEQ).

Belongs to the FARP (FMRFamide related peptide) family. Each flp gene is expressed in a distinct set of neurons.

It localises to the secreted. Its function is as follows. FMRFamides and FMRFamide-like peptides are neuropeptides. AQTFVRF-amide inhibits the activity of dissected pharyngeal myogenic muscle system. The polypeptide is FMRFamide-like neuropeptides 16 (Caenorhabditis elegans).